The chain runs to 241 residues: ATP synthase subunit a (241 aa).

Transmembrane regions (helical) follow at residues G30–G50, F91–W111, I128–S148, L193–L213, and G214–G234.

It belongs to the ATPase A chain family. F-type ATPases have 2 components, CF(1) - the catalytic core - and CF(0) - the membrane proton channel. CF(1) has five subunits: alpha(3), beta(3), gamma(1), delta(1), epsilon(1). CF(0) has four main subunits: a, b, b' and c.

Its subcellular location is the cellular thylakoid membrane. Key component of the proton channel; it plays a direct role in the translocation of protons across the membrane. In Prochlorococcus marinus subsp. pastoris (strain CCMP1986 / NIES-2087 / MED4), this protein is ATP synthase subunit a.